Reading from the N-terminus, the 598-residue chain is Arginine--tRNA ligase (598 aa).

A 'HIGH' region motif is present at residues 131–141 (ANPTGPMHVGH). Positions 288–309 (KLPPPKSKKGQPPPQAQPDEEG) are disordered.

It belongs to the class-I aminoacyl-tRNA synthetase family. As to quaternary structure, monomer.

The protein resides in the cytoplasm. It catalyses the reaction tRNA(Arg) + L-arginine + ATP = L-arginyl-tRNA(Arg) + AMP + diphosphate. In Anaeromyxobacter dehalogenans (strain 2CP-C), this protein is Arginine--tRNA ligase.